The sequence spans 213 residues: 3,4-dihydroxy-2-butanone 4-phosphate synthase (213 aa).

Residues 27–28, Asp-32, 140–144, and Glu-164 contribute to the D-ribulose 5-phosphate site; these read RE and RTGHT. Mg(2+) is bound at residue Glu-28. His-143 lines the Mg(2+) pocket.

The protein belongs to the DHBP synthase family. Homodimer. Mg(2+) is required as a cofactor. It depends on Mn(2+) as a cofactor.

The enzyme catalyses D-ribulose 5-phosphate = (2S)-2-hydroxy-3-oxobutyl phosphate + formate + H(+). It participates in cofactor biosynthesis; riboflavin biosynthesis; 2-hydroxy-3-oxobutyl phosphate from D-ribulose 5-phosphate: step 1/1. In terms of biological role, catalyzes the conversion of D-ribulose 5-phosphate to formate and 3,4-dihydroxy-2-butanone 4-phosphate. The sequence is that of 3,4-dihydroxy-2-butanone 4-phosphate synthase from Agrobacterium fabrum (strain C58 / ATCC 33970) (Agrobacterium tumefaciens (strain C58)).